The primary structure comprises 436 residues: MAKIVKVIGREIIDSRGNPTVEAEVHLEGGFVGLAAAPSGASTGSREALELRDGDKSRFLGKGVLKAVSAVNNEIAQAILGKDGSAQAEIDQIMIDLDGTDNKSKFGANAILAVSLATAKAAAASKGLPLYAYIAELNGTPGVYSMPLPMMNIINGGEHADNNVDIQEFMIQPVGASTLKEALRIGAEVFHNLAKVLKSKGLNTAVGDEGGFAPNLASNADALACIKEAVEKAGYVLGKDVTLAMDCASSEFYNKENGLYEMKGEGKSFTSQEFTHYLEGLCNEYPIKSIEDGQDESDWEGFAYQTKVLGGKIQLVGDDLFVTNTKILKEGIEKGIANSILIKFNQIGSLTETLAAIKMAKDAGYTAVISHRSGETEDATIADLAVGTAAGQIKTGSMSRSDRVAKYNQLIRIEEALAAAGTPAPFNGLKEVKGQA.

(2R)-2-phosphoglycerate is bound at residue Gln-167. Glu-209 functions as the Proton donor in the catalytic mechanism. Residues Asp-246, Glu-291, and Asp-318 each coordinate Mg(2+). (2R)-2-phosphoglycerate contacts are provided by Lys-343, Arg-372, Ser-373, and Lys-394. Lys-343 (proton acceptor) is an active-site residue.

The protein belongs to the enolase family. As to quaternary structure, component of the RNA degradosome, a multiprotein complex involved in RNA processing and mRNA degradation. Mg(2+) serves as cofactor.

It localises to the cytoplasm. It is found in the secreted. The protein resides in the cell surface. It carries out the reaction (2R)-2-phosphoglycerate = phosphoenolpyruvate + H2O. Its pathway is carbohydrate degradation; glycolysis; pyruvate from D-glyceraldehyde 3-phosphate: step 4/5. Functionally, catalyzes the reversible conversion of 2-phosphoglycerate (2-PG) into phosphoenolpyruvate (PEP). It is essential for the degradation of carbohydrates via glycolysis. This is Enolase from Actinobacillus pleuropneumoniae serotype 5b (strain L20).